The primary structure comprises 123 residues: Small ribosomal subunit protein uS12 (123 aa).

Asp-89 bears the 3-methylthioaspartic acid mark. The disordered stretch occupies residues 104-123 (TAGVKDRKQARSKYGAKRPK). The segment covering 113–123 (ARSKYGAKRPK) has biased composition (basic residues).

It belongs to the universal ribosomal protein uS12 family. Part of the 30S ribosomal subunit. Contacts proteins S8 and S17. May interact with IF1 in the 30S initiation complex.

Its function is as follows. With S4 and S5 plays an important role in translational accuracy. Functionally, interacts with and stabilizes bases of the 16S rRNA that are involved in tRNA selection in the A site and with the mRNA backbone. Located at the interface of the 30S and 50S subunits, it traverses the body of the 30S subunit contacting proteins on the other side and probably holding the rRNA structure together. The combined cluster of proteins S8, S12 and S17 appears to hold together the shoulder and platform of the 30S subunit. This Neisseria meningitidis serogroup C (strain 053442) protein is Small ribosomal subunit protein uS12.